The following is a 309-amino-acid chain: Ornithine carbamoyltransferase (309 aa).

Carbamoyl phosphate contacts are provided by residues 56–59 (STRT), glutamine 83, arginine 107, and 134–137 (HPCQ). L-ornithine contacts are provided by residues asparagine 165, aspartate 223, and 227–228 (SM). Residues 263–264 (CL) and arginine 291 each bind carbamoyl phosphate.

This sequence belongs to the aspartate/ornithine carbamoyltransferase superfamily. OTCase family.

It localises to the cytoplasm. The enzyme catalyses carbamoyl phosphate + L-ornithine = L-citrulline + phosphate + H(+). Its pathway is amino-acid biosynthesis; L-arginine biosynthesis; L-arginine from L-ornithine and carbamoyl phosphate: step 1/3. Reversibly catalyzes the transfer of the carbamoyl group from carbamoyl phosphate (CP) to the N(epsilon) atom of ornithine (ORN) to produce L-citrulline. This is Ornithine carbamoyltransferase from Burkholderia cenocepacia (strain HI2424).